The chain runs to 443 residues: Tryptophan synthase beta chain 2, chloroplastic (443 aa).

The disordered stretch occupies residues 1–32; it reads PGPPPPAPEGRRRRGRGRNAAGQAVAAEASPA. A chloroplast-targeting transit peptide spans 1–45; that stretch reads PGPPPPAPEGRRRRGRGRNAAGQAVAAEASPAAVEMGNGAAAPGL. Positions 18–32 are enriched in low complexity; the sequence is RNAAGQAVAAEASPA. Lys-138 is subject to N6-(pyridoxal phosphate)lysine.

It belongs to the TrpB family. Tetramer of two alpha and two beta chains. Pyridoxal 5'-phosphate serves as cofactor.

It is found in the plastid. The protein localises to the chloroplast. The catalysed reaction is (1S,2R)-1-C-(indol-3-yl)glycerol 3-phosphate + L-serine = D-glyceraldehyde 3-phosphate + L-tryptophan + H2O. The protein operates within amino-acid biosynthesis; L-tryptophan biosynthesis; L-tryptophan from chorismate: step 5/5. Functionally, the beta subunit is responsible for the synthesis of L-tryptophan from indole and L-serine. This Zea mays (Maize) protein is Tryptophan synthase beta chain 2, chloroplastic (TSB2).